The sequence spans 454 residues: UDP-N-acetylmuramoyl-tripeptide--D-alanyl-D-alanine ligase (454 aa).

116-122 provides a ligand contact to ATP; the sequence is GSVGKTT.

The protein belongs to the MurCDEF family. MurF subfamily.

It localises to the cytoplasm. The catalysed reaction is D-alanyl-D-alanine + UDP-N-acetyl-alpha-D-muramoyl-L-alanyl-gamma-D-glutamyl-meso-2,6-diaminopimelate + ATP = UDP-N-acetyl-alpha-D-muramoyl-L-alanyl-gamma-D-glutamyl-meso-2,6-diaminopimeloyl-D-alanyl-D-alanine + ADP + phosphate + H(+). It participates in cell wall biogenesis; peptidoglycan biosynthesis. In terms of biological role, involved in cell wall formation. Catalyzes the final step in the synthesis of UDP-N-acetylmuramoyl-pentapeptide, the precursor of murein. The protein is UDP-N-acetylmuramoyl-tripeptide--D-alanyl-D-alanine ligase of Synechocystis sp. (strain ATCC 27184 / PCC 6803 / Kazusa).